The sequence spans 247 residues: 2,3-bisphosphoglycerate-dependent phosphoglycerate mutase (247 aa).

Substrate contacts are provided by residues 8-15, 21-22, arginine 60, 87-90, lysine 98, 114-115, and 183-184; these read RHGESQWN, TG, ERHY, RR, and GN. The active-site Tele-phosphohistidine intermediate is the histidine 9. Glutamate 87 (proton donor/acceptor) is an active-site residue.

It belongs to the phosphoglycerate mutase family. BPG-dependent PGAM subfamily.

The enzyme catalyses (2R)-2-phosphoglycerate = (2R)-3-phosphoglycerate. It functions in the pathway carbohydrate degradation; glycolysis; pyruvate from D-glyceraldehyde 3-phosphate: step 3/5. Catalyzes the interconversion of 2-phosphoglycerate and 3-phosphoglycerate. The polypeptide is 2,3-bisphosphoglycerate-dependent phosphoglycerate mutase (Chlorobaculum parvum (strain DSM 263 / NCIMB 8327) (Chlorobium vibrioforme subsp. thiosulfatophilum)).